The chain runs to 503 residues: Probable DNA ligase (503 aa).

D212 is an ATP binding site. K214 (N6-AMP-lysine intermediate) is an active-site residue. 6 residues coordinate ATP: R219, R234, E263, F296, R368, and K374.

The protein belongs to the ATP-dependent DNA ligase family. The cofactor is Mg(2+).

The catalysed reaction is ATP + (deoxyribonucleotide)n-3'-hydroxyl + 5'-phospho-(deoxyribonucleotide)m = (deoxyribonucleotide)n+m + AMP + diphosphate.. In terms of biological role, DNA ligase that seals nicks in double-stranded DNA during DNA replication, DNA recombination and DNA repair. The protein is Probable DNA ligase of Kineococcus radiotolerans (strain ATCC BAA-149 / DSM 14245 / SRS30216).